The following is a 182-amino-acid chain: ATP synthase subunit delta (182 aa).

This sequence belongs to the ATPase delta chain family. F-type ATPases have 2 components, F(1) - the catalytic core - and F(0) - the membrane proton channel. F(1) has five subunits: alpha(3), beta(3), gamma(1), delta(1), epsilon(1). CF(0) has four main subunits: a(1), b(1), b'(1) and c(10-14). The alpha and beta chains form an alternating ring which encloses part of the gamma chain. F(1) is attached to F(0) by a central stalk formed by the gamma and epsilon chains, while a peripheral stalk is formed by the delta, b and b' chains.

The protein localises to the cellular thylakoid membrane. Functionally, f(1)F(0) ATP synthase produces ATP from ADP in the presence of a proton or sodium gradient. F-type ATPases consist of two structural domains, F(1) containing the extramembraneous catalytic core and F(0) containing the membrane proton channel, linked together by a central stalk and a peripheral stalk. During catalysis, ATP synthesis in the catalytic domain of F(1) is coupled via a rotary mechanism of the central stalk subunits to proton translocation. This protein is part of the stalk that links CF(0) to CF(1). It either transmits conformational changes from CF(0) to CF(1) or is implicated in proton conduction. The polypeptide is ATP synthase subunit delta (Synechococcus sp. (strain CC9605)).